Consider the following 421-residue polypeptide: RNase J-like protein (421 aa).

Zn(2+)-binding residues include histidine 55, histidine 57, aspartate 59, histidine 60, histidine 132, aspartate 153, and histidine 389.

Belongs to the metallo-beta-lactamase superfamily. RNA-metabolizing metallo-beta-lactamase-like family. In terms of assembly, forms homodimers on heating to 60 degrees Celsius which may be the active form. The cofactor is Zn(2+).

With respect to regulation, inhibited by imidazole. Functionally, a 5'-3' exoribonuclease with a strong reference for 5'-monophosphorylated RNA and no endoribonuclease activty. The polypeptide is RNase J-like protein (Methanocaldococcus jannaschii (strain ATCC 43067 / DSM 2661 / JAL-1 / JCM 10045 / NBRC 100440) (Methanococcus jannaschii)).